Here is a 339-residue protein sequence, read N- to C-terminus: uncharacterized protein (339 aa).

4 residues coordinate Zn(2+): His17, His19, His197, and Asp278. Asp279 provides a ligand contact to substrate.

It belongs to the metallo-dependent hydrolases superfamily. Adenosine and AMP deaminases family. Adenine deaminase type 2 subfamily. It depends on Zn(2+) as a cofactor.

It is found in the cytoplasm. The protein resides in the nucleus. This is an uncharacterized protein from Schizosaccharomyces pombe (strain 972 / ATCC 24843) (Fission yeast).